Here is a 93-residue protein sequence, read N- to C-terminus: Alpha-defensin 24 (93 aa).

Positions 1–19 are cleaved as a signal peptide; sequence MKTLILLSALVLLAFQVQA. The propeptide occupies 20-58; the sequence is DPIQNTDEETKTEEQPGEEDQAVSVSFGDPEGASLQEES. The interval 23 to 54 is disordered; sequence QNTDEETKTEEQPGEEDQAVSVSFGDPEGASL. Disulfide bonds link Cys64/Cys92, Cys66/Cys81, and Cys71/Cys91.

It belongs to the alpha-defensin family.

It localises to the secreted. In terms of biological role, may have microbicidal activities. The protein is Alpha-defensin 24 (Defa24) of Mus musculus (Mouse).